Reading from the N-terminus, the 344-residue chain is Glyceraldehyde-3-phosphate dehydrogenase (344 aa).

Residues 11–12 (TI) and glycine 110 each bind NAD(+). 139-141 (SCN) provides a ligand contact to D-glyceraldehyde 3-phosphate. The Nucleophile role is filled by cysteine 140. Arginine 169 serves as a coordination point for NAD(+). 195-196 (HG) is a D-glyceraldehyde 3-phosphate binding site. Glutamine 302 serves as a coordination point for NAD(+).

Belongs to the glyceraldehyde-3-phosphate dehydrogenase family. Homotetramer.

Its subcellular location is the cytoplasm. It catalyses the reaction D-glyceraldehyde 3-phosphate + phosphate + NADP(+) = (2R)-3-phospho-glyceroyl phosphate + NADPH + H(+). The catalysed reaction is D-glyceraldehyde 3-phosphate + phosphate + NAD(+) = (2R)-3-phospho-glyceroyl phosphate + NADH + H(+). The protein operates within carbohydrate degradation; glycolysis; pyruvate from D-glyceraldehyde 3-phosphate: step 1/5. The sequence is that of Glyceraldehyde-3-phosphate dehydrogenase from Pyrobaculum arsenaticum (strain DSM 13514 / JCM 11321 / PZ6).